Here is a 598-residue protein sequence, read N- to C-terminus: (-)-endo-fenchol synthase, chloroplastic (598 aa).

The N-terminal 34 residues, 1-34 (MWSTISISMNVAILKKPLNFLHNSNNKASNPRCV), are a transit peptide targeting the chloroplast. Residues aspartate 351, aspartate 355, aspartate 495, threonine 499, and glutamate 503 each coordinate Mg(2+). The DDXXD motif motif lies at 351–355 (DDVYD).

The protein belongs to the terpene synthase family. It depends on Mg(2+) as a cofactor. The cofactor is Mn(2+).

The protein resides in the plastid. It localises to the chloroplast. It carries out the reaction (2E)-geranyl diphosphate + H2O = (1S,2S,4R)-endo-fenchol + diphosphate. The protein operates within secondary metabolite biosynthesis; terpenoid biosynthesis. Functionally, monoterpene synthase that catalyzes the formation of fenchol from geranyl diphosphate. This is (-)-endo-fenchol synthase, chloroplastic (FES) from Ocimum basilicum (Sweet basil).